The primary structure comprises 273 residues: Shikimate dehydrogenase (NADP(+)) (273 aa).

Shikimate is bound by residues 14-16 (SKS) and Thr-61. Lys-65 acts as the Proton acceptor in catalysis. Residues Asn-86 and Asp-102 each contribute to the shikimate site. NADP(+) is bound by residues 126–130 (GAGGA), 150–155 (NRTHAK), and Met-213. Tyr-215 contributes to the shikimate binding site. Residue Gly-237 participates in NADP(+) binding.

The protein belongs to the shikimate dehydrogenase family. In terms of assembly, homodimer.

It catalyses the reaction shikimate + NADP(+) = 3-dehydroshikimate + NADPH + H(+). It participates in metabolic intermediate biosynthesis; chorismate biosynthesis; chorismate from D-erythrose 4-phosphate and phosphoenolpyruvate: step 4/7. Its function is as follows. Involved in the biosynthesis of the chorismate, which leads to the biosynthesis of aromatic amino acids. Catalyzes the reversible NADPH linked reduction of 3-dehydroshikimate (DHSA) to yield shikimate (SA). The polypeptide is Shikimate dehydrogenase (NADP(+)) (Aeromonas salmonicida (strain A449)).